Consider the following 687-residue polypeptide: MAALRPARTSVAEKKTFKLHALSAVVMGLCASGQAYAQTESTNSNKKEEMPVVVVIGEKTERTIYDTSSSVQVFDQETIDNTPGATEIDDLLQLIPNMVDSGQGNSMPTVRGIDGSGPSIGGLASFAGTSPRLNMSIDGRSLTYSEIAFGPRSLWDMQQVEVYLGPQSYIQGRNASAGAIVMKTNDPTHHFESAVKAGVGERNYSQTAAMISAPIIQDELAFRLSFDQQKRDSFVDLASYEPAGDAKKIEMNSVRGKLLYEPSALAGFKTTLGVSHMDSRGPQSESTNVVGNEAFRPVYETKSLSTAWDISWQLNEVLTFENNLVYSKFAFDRYTNPLQKGDYTAEGKEFHVEPLLRYLSLGGRVNALVGARYYKSSQDDEYVDATSANPMSGSTKTQSAFAELTYALTQSIDVTVAGRYEKERVKRKVSDPRFKLDHDDTLSVFLPKFDIAFKPDMAQTFGFKVAKGYNSGGAGLAFNPILGGGFSPYQFEEEYIWNYEFYTRHRLGNSVELMTNTFYNDFDSMQMTQTLSNGDVLIANLDNAKTYGAEIGTRWYATDSLELFANLGLLKTEYKEVNGTSKELERAPNMTGNLGGQYSFFDGFELSANAAYTGDYFSDRSNTEIVKIDAYWVANAQLAYVFENGRAALFATNLFDSDKTTLYARGSLNEPLKQQPRMIGASLQLNF.

The signal sequence occupies residues 1 to 37 (MAALRPARTSVAEKKTFKLHALSAVVMGLCASGQAYA). The TBDR plug domain maps to 63–185 (TIYDTSSSVQ…SAGAIVMKTN (123 aa)). The region spanning 190–687 (HFESAVKAGV…MIGASLQLNF (498 aa)) is the TBDR beta-barrel domain. A TonB C-terminal box motif is present at residues 670–687 (EPLKQQPRMIGASLQLNF).

This sequence belongs to the TonB-dependent receptor family.

It is found in the cell outer membrane. In terms of biological role, involved in the uptake of iron in complex with vulnibactin, a catecholate siderophore synthesized by V.vulnificus. Binds and transports ferric vulnibactin across the outer membrane. The energy source is provided by the inner membrane TonB system. This chain is Ferric vulnibactin receptor VuuA, found in Vibrio vulnificus.